The following is a 223-amino-acid chain: UPF0441 protein YgiB (223 aa).

The segment covering 178–195 (TVPKTAMAPKPATTTTVT) has biased composition (low complexity). Residues 178 to 223 (TVPKTAMAPKPATTTTVTRGGFGESVAKQSTMQRSAAGTSTRSMGG) form a disordered region. The segment covering 204–223 (AKQSTMQRSAAGTSTRSMGG) has biased composition (polar residues).

It belongs to the UPF0441 family.

The protein is UPF0441 protein YgiB of Salmonella enteritidis PT4 (strain P125109).